Reading from the N-terminus, the 379-residue chain is Tryptophan 2,3-dioxygenase (379 aa).

Residues 57–61 (FIITH) and Arg128 contribute to the substrate site. His312 contributes to the heme binding site. Thr327 is a binding site for substrate.

This sequence belongs to the tryptophan 2,3-dioxygenase family. In terms of assembly, homotetramer. Dimer of dimers. It depends on heme as a cofactor.

It carries out the reaction L-tryptophan + O2 = N-formyl-L-kynurenine. Its pathway is amino-acid degradation; L-tryptophan degradation via kynurenine pathway; L-kynurenine from L-tryptophan: step 1/2. The protein operates within pigment biosynthesis; ommochrome biosynthesis. Heme-dependent dioxygenase that catalyzes the oxidative cleavage of the L-tryptophan (L-Trp) pyrrole ring and converts L-tryptophan to N-formyl-L-kynurenine. Catalyzes the oxidative cleavage of the indole moiety. This Drosophila erecta (Fruit fly) protein is Tryptophan 2,3-dioxygenase.